Consider the following 445-residue polypeptide: UDP-N-acetylmuramoylalanine--D-glutamate ligase (445 aa).

ATP is bound at residue 118–124; sequence GTNGKTT.

Belongs to the MurCDEF family.

The protein localises to the cytoplasm. The catalysed reaction is UDP-N-acetyl-alpha-D-muramoyl-L-alanine + D-glutamate + ATP = UDP-N-acetyl-alpha-D-muramoyl-L-alanyl-D-glutamate + ADP + phosphate + H(+). Its pathway is cell wall biogenesis; peptidoglycan biosynthesis. Functionally, cell wall formation. Catalyzes the addition of glutamate to the nucleotide precursor UDP-N-acetylmuramoyl-L-alanine (UMA). The polypeptide is UDP-N-acetylmuramoylalanine--D-glutamate ligase (Macrococcus caseolyticus (strain JCSC5402) (Macrococcoides caseolyticum)).